The chain runs to 197 residues: Peptide deformylase (197 aa).

Positions 106 and 148 each coordinate Fe cation. Residue E149 is part of the active site. Position 152 (H152) interacts with Fe cation.

Belongs to the polypeptide deformylase family. It depends on Fe(2+) as a cofactor.

It carries out the reaction N-terminal N-formyl-L-methionyl-[peptide] + H2O = N-terminal L-methionyl-[peptide] + formate. Its function is as follows. Removes the formyl group from the N-terminal Met of newly synthesized proteins. Requires at least a dipeptide for an efficient rate of reaction. N-terminal L-methionine is a prerequisite for activity but the enzyme has broad specificity at other positions. The chain is Peptide deformylase from Mycobacterium sp. (strain JLS).